A 517-amino-acid polypeptide reads, in one-letter code: Dopamine receptor 4 (517 aa).

Residues 1-46 (MLAYGSDPNAEDLYITMTPSVSTENDTTVWATEEPAAIVWRHPLLA) are Extracellular-facing. Asn25 carries N-linked (GlcNAc...) asparagine glycosylation. A helical membrane pass occupies residues 47–67 (IALFSICLLTVAGNCLVVIAV). Residues 68–77 (CTKKYLRNPT) lie on the Cytoplasmic side of the membrane. The chain crosses the membrane as a helical span at residues 78-98 (GYLIISLAIADLIVGVIVMPM). The Extracellular portion of the chain corresponds to 99 to 108 (NSLFEIANHT). Asn106 carries an N-linked (GlcNAc...) asparagine glycan. A helical membrane pass occupies residues 109-129 (WLFGLMMCDVFHAMDILASTA). Residues 130 to 159 (SIWNLCVISLDRYMAGQDPIGYRDKVSKRR) are Cytoplasmic-facing. Residues 160–180 (ILMAILSVWVLSAILSFPGII) form a helical membrane-spanning segment. At 181 to 209 (WWRTSSPHLYEDQSQCLFTDSKMYVSFSS) the chain is on the extracellular side. The chain crosses the membrane as a helical span at residues 210–230 (LVSFYIPLFLILFAYGKVYII). Topologically, residues 231 to 409 (ATRHSKGMRM…YVHEQRAART (179 aa)) are cytoplasmic. The segment at 309 to 339 (NDRGEHNNNNTVRQPLLRGTEGCHSDSISRS) is disordered. Residues 410–430 (LSIVVGAFILCWTPFFVFTPL) traverse the membrane as a helical segment. The Extracellular portion of the chain corresponds to 431 to 442 (TAFCESCFSNKE). A helical membrane pass occupies residues 443–463 (TIFTFVTWAGHLNSMLNPLIY). Topologically, residues 464-517 (SRFSRDFRRAFKQILTCQRQQKVKTAFKTPLSLVFTQLISVTQMWEQPPNTSIE) are cytoplasmic.

The protein belongs to the G-protein coupled receptor 1 family. As to expression, expressed in pharyngeal neurons I1 and I2, neurons ASG, AVL, CAN, PQR, vulva, intestine, rectal glands and rectal epithelial glands. Also expressed in neurons in ray 8 in males.

The protein localises to the cell membrane. Its function is as follows. Receptor for dopamine. The activity of this receptor is mediated by G proteins which activate adenylyl cyclase. In terms of antagonist responses, would be classed with the D1-like dopamine receptor group. This Caenorhabditis elegans protein is Dopamine receptor 4 (dop-4).